We begin with the raw amino-acid sequence, 666 residues long: ATP synthase subunit alpha 2 (666 aa).

182–189 (GDRATGKT) is an ATP binding site. The disordered stretch occupies residues 527–666 (MPAEDAAGDI…DAEAEARHKR (140 aa)). Residues 545–590 (ARGDADRDADHGANREVSREVSPEASREVSREVSCEVSHEADRDAA) show a composition bias toward basic and acidic residues. The segment covering 591 to 601 (ADAARVAGRAP) has biased composition (low complexity). Over residues 623-641 (ADGDRASASRPRPDARGDA) the composition is skewed to basic and acidic residues.

It belongs to the ATPase alpha/beta chains family. As to quaternary structure, F-type ATPases have 2 components, CF(1) - the catalytic core - and CF(0) - the membrane proton channel. CF(1) has five subunits: alpha(3), beta(3), gamma(1), delta(1), epsilon(1). CF(0) has three main subunits: a(1), b(2) and c(9-12). The alpha and beta chains form an alternating ring which encloses part of the gamma chain. CF(1) is attached to CF(0) by a central stalk formed by the gamma and epsilon chains, while a peripheral stalk is formed by the delta and b chains.

The protein resides in the cell inner membrane. The enzyme catalyses ATP + H2O + 4 H(+)(in) = ADP + phosphate + 5 H(+)(out). In terms of biological role, produces ATP from ADP in the presence of a proton gradient across the membrane. The alpha chain is a regulatory subunit. In Burkholderia pseudomallei (strain 1106a), this protein is ATP synthase subunit alpha 2.